Consider the following 361-residue polypeptide: [LysW]-lysine hydrolase (361 aa).

His-67 is a binding site for Zn(2+). Asp-69 is a catalytic residue. Residue Asp-91 participates in Zn(2+) binding. Glu-124 serves as the catalytic Proton acceptor. The Zn(2+) site is built by Glu-125, Glu-148, and His-326.

This sequence belongs to the peptidase M20A family. LysK subfamily. Zn(2+) is required as a cofactor. The cofactor is Co(2+).

It is found in the cytoplasm. The catalysed reaction is [amino-group carrier protein]-C-terminal-gamma-(L-lysyl)-L-glutamate + H2O = [amino-group carrier protein]-C-terminal-L-glutamate + L-lysine. It participates in amino-acid biosynthesis; L-lysine biosynthesis via AAA pathway; L-lysine from L-alpha-aminoadipate (Thermus route): step 5/5. Catalyzes the release of L-lysine from [LysW]-gamma-L-lysine. This chain is [LysW]-lysine hydrolase, found in Thermus thermophilus (strain ATCC 27634 / DSM 579 / HB8).